Reading from the N-terminus, the 355-residue chain is Sorbitol dehydrogenase (355 aa).

Alanine 2 is modified (N-acetylalanine). Cysteine 43 is a Zn(2+) binding site. Tyrosine 49 is a binding site for substrate. Residues histidine 68 and glutamate 69 each coordinate Zn(2+). Glutamate 154 contributes to the substrate binding site. NAD(+)-binding positions include isoleucine 182, aspartate 202, arginine 207, 271-273 (VGL), and 295-297 (IFR). Substrate contacts are provided by arginine 297 and tyrosine 298.

Belongs to the zinc-containing alcohol dehydrogenase family. As to quaternary structure, homotetramer. Requires Zn(2+) as cofactor. Expressed in liver.

It localises to the mitochondrion membrane. The protein localises to the cell projection. The protein resides in the cilium. It is found in the flagellum. The catalysed reaction is keto-D-fructose + NADH + H(+) = D-sorbitol + NAD(+). In terms of biological role, polyol dehydrogenase that catalyzes the reversible NAD(+)-dependent oxidation of various sugar alcohols. Is active with D-sorbitol (D-glucitol) as substrate, leading to the C2-oxidized product D-fructose. Is a key enzyme in the polyol pathway that interconverts glucose and fructose via sorbitol, which constitutes an important alternate route for glucose metabolism. In Gallus gallus (Chicken), this protein is Sorbitol dehydrogenase (SORD).